The following is a 320-amino-acid chain: Aspartate carbamoyltransferase catalytic subunit (320 aa).

2 residues coordinate carbamoyl phosphate: Arg68 and Thr69. Residue Lys96 participates in L-aspartate binding. Residues Arg118, His148, and Gln151 each contribute to the carbamoyl phosphate site. The L-aspartate site is built by Arg181 and Arg236. Carbamoyl phosphate-binding residues include Gly277 and Pro278.

It belongs to the aspartate/ornithine carbamoyltransferase superfamily. ATCase family. Heterododecamer (2C3:3R2) of six catalytic PyrB chains organized as two trimers (C3), and six regulatory PyrI chains organized as three dimers (R2).

The catalysed reaction is carbamoyl phosphate + L-aspartate = N-carbamoyl-L-aspartate + phosphate + H(+). It functions in the pathway pyrimidine metabolism; UMP biosynthesis via de novo pathway; (S)-dihydroorotate from bicarbonate: step 2/3. Functionally, catalyzes the condensation of carbamoyl phosphate and aspartate to form carbamoyl aspartate and inorganic phosphate, the committed step in the de novo pyrimidine nucleotide biosynthesis pathway. The protein is Aspartate carbamoyltransferase catalytic subunit of Acidovorax ebreus (strain TPSY) (Diaphorobacter sp. (strain TPSY)).